The sequence spans 619 residues: Dihydroxy-acid dehydratase (619 aa).

Mg(2+) is bound at residue Asp81. Cys122 is a [2Fe-2S] cluster binding site. 2 residues coordinate Mg(2+): Asp123 and Lys124. Lys124 carries the post-translational modification N6-carboxylysine. Cys198 is a binding site for [2Fe-2S] cluster. Glu494 contributes to the Mg(2+) binding site. Ser520 acts as the Proton acceptor in catalysis.

The protein belongs to the IlvD/Edd family. In terms of assembly, homodimer. It depends on [2Fe-2S] cluster as a cofactor. The cofactor is Mg(2+).

The enzyme catalyses (2R)-2,3-dihydroxy-3-methylbutanoate = 3-methyl-2-oxobutanoate + H2O. It catalyses the reaction (2R,3R)-2,3-dihydroxy-3-methylpentanoate = (S)-3-methyl-2-oxopentanoate + H2O. It functions in the pathway amino-acid biosynthesis; L-isoleucine biosynthesis; L-isoleucine from 2-oxobutanoate: step 3/4. The protein operates within amino-acid biosynthesis; L-valine biosynthesis; L-valine from pyruvate: step 3/4. Functionally, functions in the biosynthesis of branched-chain amino acids. Catalyzes the dehydration of (2R,3R)-2,3-dihydroxy-3-methylpentanoate (2,3-dihydroxy-3-methylvalerate) into 2-oxo-3-methylpentanoate (2-oxo-3-methylvalerate) and of (2R)-2,3-dihydroxy-3-methylbutanoate (2,3-dihydroxyisovalerate) into 2-oxo-3-methylbutanoate (2-oxoisovalerate), the penultimate precursor to L-isoleucine and L-valine, respectively. This Neisseria meningitidis serogroup C / serotype 2a (strain ATCC 700532 / DSM 15464 / FAM18) protein is Dihydroxy-acid dehydratase.